Here is a 276-residue protein sequence, read N- to C-terminus: Putative pyruvate, phosphate dikinase regulatory protein (276 aa).

153 to 160 serves as a coordination point for ADP; the sequence is GISRTSKT.

The protein belongs to the pyruvate, phosphate/water dikinase regulatory protein family. PDRP subfamily.

The enzyme catalyses N(tele)-phospho-L-histidyl/L-threonyl-[pyruvate, phosphate dikinase] + ADP = N(tele)-phospho-L-histidyl/O-phospho-L-threonyl-[pyruvate, phosphate dikinase] + AMP + H(+). It carries out the reaction N(tele)-phospho-L-histidyl/O-phospho-L-threonyl-[pyruvate, phosphate dikinase] + phosphate + H(+) = N(tele)-phospho-L-histidyl/L-threonyl-[pyruvate, phosphate dikinase] + diphosphate. Functionally, bifunctional serine/threonine kinase and phosphorylase involved in the regulation of the pyruvate, phosphate dikinase (PPDK) by catalyzing its phosphorylation/dephosphorylation. The chain is Putative pyruvate, phosphate dikinase regulatory protein from Brucella anthropi (strain ATCC 49188 / DSM 6882 / CCUG 24695 / JCM 21032 / LMG 3331 / NBRC 15819 / NCTC 12168 / Alc 37) (Ochrobactrum anthropi).